A 511-amino-acid chain; its full sequence is NADH-ubiquinone oxidoreductase chain 4 (511 aa).

Transmembrane regions (helical) follow at residues 1–21 (MNQI…IIII), 39–59 (ISLL…YLFN), 78–98 (IDGI…ISLI), 116–136 (VLLI…LDLI), 137–157 (TFYI…GKLG), 186–206 (YIFI…GIYI), 220–240 (IILS…GILV), 264–284 (IILA…LILI), 289–309 (VIII…FYIG), 318–338 (IKVI…MSIF), 349–369 (LLIS…VGGI), 388–408 (YMPI…GIPL), 422–442 (IFIY…ITTI), and 476–496 (LLLN…NLII).

It belongs to the complex I subunit 4 family.

It is found in the mitochondrion membrane. It catalyses the reaction a ubiquinone + NADH + 5 H(+)(in) = a ubiquinol + NAD(+) + 4 H(+)(out). In terms of biological role, core subunit of the mitochondrial membrane respiratory chain NADH dehydrogenase (Complex I) that is believed to belong to the minimal assembly required for catalysis. Complex I functions in the transfer of electrons from NADH to the respiratory chain. The immediate electron acceptor for the enzyme is believed to be ubiquinone. The chain is NADH-ubiquinone oxidoreductase chain 4 (ND4) from Wickerhamomyces canadensis (Yeast).